Reading from the N-terminus, the 218-residue chain is Ribose-5-phosphate isomerase A (218 aa).

Substrate is bound by residues 28-31 (TGST), 81-84 (DSAD), and 94-97 (KGGG). The Proton acceptor role is filled by Glu103. Position 121 (Lys121) interacts with substrate.

The protein belongs to the ribose 5-phosphate isomerase family. Homodimer.

The enzyme catalyses aldehydo-D-ribose 5-phosphate = D-ribulose 5-phosphate. It functions in the pathway carbohydrate degradation; pentose phosphate pathway; D-ribose 5-phosphate from D-ribulose 5-phosphate (non-oxidative stage): step 1/1. In terms of biological role, catalyzes the reversible conversion of ribose-5-phosphate to ribulose 5-phosphate. The protein is Ribose-5-phosphate isomerase A of Buchnera aphidicola subsp. Baizongia pistaciae (strain Bp).